A 156-amino-acid chain; its full sequence is ATP synthase subunit b (156 aa).

Residues 3 to 23 (ITFTIFAQSIAFAALIWIVAT) traverse the membrane as a helical segment.

It belongs to the ATPase B chain family. F-type ATPases have 2 components, F(1) - the catalytic core - and F(0) - the membrane proton channel. F(1) has five subunits: alpha(3), beta(3), gamma(1), delta(1), epsilon(1). F(0) has three main subunits: a(1), b(2) and c(10-14). The alpha and beta chains form an alternating ring which encloses part of the gamma chain. F(1) is attached to F(0) by a central stalk formed by the gamma and epsilon chains, while a peripheral stalk is formed by the delta and b chains.

It is found in the cell inner membrane. In terms of biological role, f(1)F(0) ATP synthase produces ATP from ADP in the presence of a proton or sodium gradient. F-type ATPases consist of two structural domains, F(1) containing the extramembraneous catalytic core and F(0) containing the membrane proton channel, linked together by a central stalk and a peripheral stalk. During catalysis, ATP synthesis in the catalytic domain of F(1) is coupled via a rotary mechanism of the central stalk subunits to proton translocation. Functionally, component of the F(0) channel, it forms part of the peripheral stalk, linking F(1) to F(0). This is ATP synthase subunit b from Xylella fastidiosa (strain M12).